We begin with the raw amino-acid sequence, 367 residues long: Probable butyrate kinase (367 aa).

The protein belongs to the acetokinase family.

The protein localises to the cytoplasm. The catalysed reaction is butanoate + ATP = butanoyl phosphate + ADP. In Bacillus cereus (strain B4264), this protein is Probable butyrate kinase.